The chain runs to 716 residues: Splicing factor Cactin (716 aa).

Residues 1–104 form a disordered region; it reads MGSHGKGKRD…SKKAQKKALR (104 aa). The span at 10–22 shows a compositional bias: basic and acidic residues; that stretch reads DRSGRQKKRRDES. Over residues 25–45 the composition is skewed to low complexity; the sequence is GSESESYTSDSDGSDDLSPPR. Residues 46-61 show a composition bias toward basic residues; sequence SSRRKKGSSSRRTRRR. Residues 81–95 show a composition bias toward basic and acidic residues; that stretch reads SSKDYSEEKVTEYMS. Residues 153 to 201 are a coiled coil; it reads SVKAEKRRHRERMTEVEKVKKRREERAVEKARHEEEMALLARERARAEF. S450 carries the phosphoserine modification. A disordered region spans residues 466–525; the sequence is VEENEEEINDTNLSDAEEAFSPEPVAEEEEADEAAEAAGSFSPELMHGDDREEAIDPEED. Acidic residues predominate over residues 468-500; it reads ENEEEINDTNLSDAEEAFSPEPVAEEEEADEAA.

Belongs to the CACTIN family. As to quaternary structure, interacts with At5g63440.

The protein resides in the nucleus speckle. Its function is as follows. Plays a role in pre-mRNA splicing by facilitating excision of a subset of introns. Required for embryogenesis. This Arabidopsis thaliana (Mouse-ear cress) protein is Splicing factor Cactin (CTN).